The primary structure comprises 336 residues: Ketol-acid reductoisomerase (NADP(+)) (336 aa).

The 181-residue stretch at 3–183 (ATMYYDRDVS…GGTRAGVLET (181 aa)) folds into the KARI N-terminal Rossmann domain. NADP(+) contacts are provided by residues 26–29 (YGSQ), arginine 49, serine 52, serine 54, and 84–87 (DETQ). The active site involves histidine 109. Glycine 135 provides a ligand contact to NADP(+). One can recognise a KARI C-terminal knotted domain in the interval 184–329 (TFKEETETDL…RELRSKMPFI (146 aa)). Mg(2+)-binding residues include aspartate 192, glutamate 196, glutamate 228, and glutamate 232. Serine 253 lines the substrate pocket.

Belongs to the ketol-acid reductoisomerase family. Requires Mg(2+) as cofactor.

It carries out the reaction (2R)-2,3-dihydroxy-3-methylbutanoate + NADP(+) = (2S)-2-acetolactate + NADPH + H(+). The enzyme catalyses (2R,3R)-2,3-dihydroxy-3-methylpentanoate + NADP(+) = (S)-2-ethyl-2-hydroxy-3-oxobutanoate + NADPH + H(+). It functions in the pathway amino-acid biosynthesis; L-isoleucine biosynthesis; L-isoleucine from 2-oxobutanoate: step 2/4. It participates in amino-acid biosynthesis; L-valine biosynthesis; L-valine from pyruvate: step 2/4. Involved in the biosynthesis of branched-chain amino acids (BCAA). Catalyzes an alkyl-migration followed by a ketol-acid reduction of (S)-2-acetolactate (S2AL) to yield (R)-2,3-dihydroxy-isovalerate. In the isomerase reaction, S2AL is rearranged via a Mg-dependent methyl migration to produce 3-hydroxy-3-methyl-2-ketobutyrate (HMKB). In the reductase reaction, this 2-ketoacid undergoes a metal-dependent reduction by NADPH to yield (R)-2,3-dihydroxy-isovalerate. This chain is Ketol-acid reductoisomerase (NADP(+)), found in Deinococcus geothermalis (strain DSM 11300 / CIP 105573 / AG-3a).